The chain runs to 151 residues: Large ribosomal subunit protein uL13 (151 aa).

Residues 129-151 (PTHPHDAQKPKELNINTIPGAES) form a disordered region. Basic and acidic residues predominate over residues 131–140 (HPHDAQKPKE).

The protein belongs to the universal ribosomal protein uL13 family. In terms of assembly, part of the 50S ribosomal subunit.

Functionally, this protein is one of the early assembly proteins of the 50S ribosomal subunit, although it is not seen to bind rRNA by itself. It is important during the early stages of 50S assembly. The protein is Large ribosomal subunit protein uL13 of Trichormus variabilis (strain ATCC 29413 / PCC 7937) (Anabaena variabilis).